The following is a 268-amino-acid chain: Tryptophan synthase alpha chain (268 aa).

Active-site proton acceptor residues include Glu49 and Asp60.

Belongs to the TrpA family. Tetramer of two alpha and two beta chains.

The enzyme catalyses (1S,2R)-1-C-(indol-3-yl)glycerol 3-phosphate + L-serine = D-glyceraldehyde 3-phosphate + L-tryptophan + H2O. Its pathway is amino-acid biosynthesis; L-tryptophan biosynthesis; L-tryptophan from chorismate: step 5/5. The alpha subunit is responsible for the aldol cleavage of indoleglycerol phosphate to indole and glyceraldehyde 3-phosphate. This is Tryptophan synthase alpha chain from Escherichia coli O6:H1 (strain CFT073 / ATCC 700928 / UPEC).